We begin with the raw amino-acid sequence, 158 residues long: Large ribosomal subunit protein uL30 (158 aa).

This sequence belongs to the universal ribosomal protein uL30 family. In terms of assembly, part of the 50S ribosomal subunit.

This chain is Large ribosomal subunit protein uL30, found in Saccharolobus solfataricus (strain ATCC 35092 / DSM 1617 / JCM 11322 / P2) (Sulfolobus solfataricus).